Reading from the N-terminus, the 358-residue chain is Prostaglandin E2 receptor EP2 subtype (358 aa).

The Extracellular portion of the chain corresponds to 1–23 (MGNASNDSQSEDCETRQWLPPGE). Asparagine 3 and asparagine 6 each carry an N-linked (GlcNAc...) asparagine glycan. The helical transmembrane segment at 24-47 (SPAISSVMFSAGVLGNLIALALLA) threads the bilayer. Over 48–65 (RRWRGDVGCSAGRRSSLS) the chain is Cytoplasmic. Residues 66–91 (LFHVLVTELVFTDLLGTCLISPVVLA) form a helical membrane-spanning segment. At 92-111 (SYARNQTLVALAPESRACTY) the chain is on the extracellular side. Asparagine 96 is a glycosylation site (N-linked (GlcNAc...) asparagine). An intrachain disulfide couples cysteine 109 to cysteine 187. A helical membrane pass occupies residues 112–132 (FAFAMTFFSLATMLMLFAMAL). Residues 133–151 (ERYLSIGHPYFYQRRVSRS) are Cytoplasmic-facing. Residues 152 to 176 (GGLAVLPVIYAVSLLFCSLPLLDYG) traverse the membrane as a helical segment. Topologically, residues 177–198 (QYVQYCPGTWCFIRHGRTAYLQ) are extracellular. Residues 199-223 (LYATLLLLLIVSVLACNFSVILNLI) form a helical membrane-spanning segment. Over 224 to 262 (RMHRRSRRSRCGPSLGSGRGGPGARRRGERVSMAEETDH) the chain is Cytoplasmic. The segment at 231 to 253 (RSRCGPSLGSGRGGPGARRRGER) is disordered. A helical transmembrane segment spans residues 263-286 (LILLAIMTITFAVCSLPFTIFAYM). An N-linked (GlcNAc...) asparagine glycan is attached at asparagine 287. Residues 287-299 (NETSSRKEKWDLQ) lie on the Extracellular side of the membrane. A helical transmembrane segment spans residues 300 to 323 (ALRFLSINSIIDPWVFAILRPPVL). At 324–358 (RLMRSVLCCRISLRTQDATQTSCSTQSDASKQADL) the chain is on the cytoplasmic side.

It belongs to the G-protein coupled receptor 1 family. Placenta and lung.

The protein resides in the cell membrane. In terms of biological role, receptor for prostaglandin E2 (PGE2). The activity of this receptor is mediated by G(s) proteins that stimulate adenylate cyclase. The subsequent raise in intracellular cAMP is responsible for the relaxing effect of this receptor on smooth muscle. This Homo sapiens (Human) protein is Prostaglandin E2 receptor EP2 subtype (PTGER2).